A 562-amino-acid chain; its full sequence is Pyruvate kinase isozyme G, chloroplastic (562 aa).

Arginine 121 provides a ligand contact to substrate. Residues asparagine 123, serine 125, aspartate 156, and threonine 157 each contribute to the K(+) site. An ATP-binding site is contributed by 123–126 (NMSH). Residue glutamate 308 coordinates Mg(2+). Substrate is bound by residues glycine 331, aspartate 332, and threonine 364. Aspartate 332 provides a ligand contact to Mg(2+).

This sequence belongs to the pyruvate kinase family. As to quaternary structure, homotetramer. Requires Mg(2+) as cofactor. K(+) is required as a cofactor. As to expression, highest levels in leaves. Also found in stems, roots and flowers.

The protein resides in the plastid. The protein localises to the chloroplast. The catalysed reaction is pyruvate + ATP = phosphoenolpyruvate + ADP + H(+). It participates in carbohydrate degradation; glycolysis; pyruvate from D-glyceraldehyde 3-phosphate: step 5/5. This is Pyruvate kinase isozyme G, chloroplastic from Nicotiana tabacum (Common tobacco).